The primary structure comprises 565 residues: Proline--tRNA ligase (565 aa).

It belongs to the class-II aminoacyl-tRNA synthetase family. ProS type 1 subfamily. Homodimer.

The protein resides in the cytoplasm. The enzyme catalyses tRNA(Pro) + L-proline + ATP = L-prolyl-tRNA(Pro) + AMP + diphosphate. In terms of biological role, catalyzes the attachment of proline to tRNA(Pro) in a two-step reaction: proline is first activated by ATP to form Pro-AMP and then transferred to the acceptor end of tRNA(Pro). As ProRS can inadvertently accommodate and process non-cognate amino acids such as alanine and cysteine, to avoid such errors it has two additional distinct editing activities against alanine. One activity is designated as 'pretransfer' editing and involves the tRNA(Pro)-independent hydrolysis of activated Ala-AMP. The other activity is designated 'posttransfer' editing and involves deacylation of mischarged Ala-tRNA(Pro). The misacylated Cys-tRNA(Pro) is not edited by ProRS. The chain is Proline--tRNA ligase from Francisella philomiragia subsp. philomiragia (strain ATCC 25017 / CCUG 19701 / FSC 153 / O#319-036).